Reading from the N-terminus, the 143-residue chain is MQFNISDIIKILPHSYPFLLVDRVIECDPGKSIKAIKNVTFNEPFFIGHFPGHPIMPGVLIIESLAQASAICVLGKETIENKVVYLRSIENAKFRKPVTPGDTLILQANIQSVCLGVHKFRCIASVSEEKVAEATISAVLQNK.

His49 is a catalytic residue.

Belongs to the thioester dehydratase family. FabZ subfamily.

It is found in the cytoplasm. The enzyme catalyses a (3R)-hydroxyacyl-[ACP] = a (2E)-enoyl-[ACP] + H2O. Involved in unsaturated fatty acids biosynthesis. Catalyzes the dehydration of short chain beta-hydroxyacyl-ACPs and long chain saturated and unsaturated beta-hydroxyacyl-ACPs. The sequence is that of 3-hydroxyacyl-[acyl-carrier-protein] dehydratase FabZ from Wolbachia sp. subsp. Drosophila simulans (strain wRi).